The sequence spans 153 residues: L-alanine exporter AlaE (153 aa).

4 helical membrane passes run 16 to 36 (VAMVIYCFITGMAVEMLLSEM), 42 to 62 (LSSRLLSIPVNIVIAWPYGLY), 86 to 106 (LFAYVSFQSPVYAAILWAIGA), and 114 to 134 (AVGSNAIISMLMGVVYGYFLE).

The protein belongs to the AlaE exporter family.

The protein resides in the cell inner membrane. Functionally, exports L-alanine. This Musicola paradisiaca (strain Ech703) (Dickeya paradisiaca) protein is L-alanine exporter AlaE.